The following is a 474-amino-acid chain: PTS system N-acetylmuramic acid-specific EIIBC component (474 aa).

The PTS EIIB type-1 domain occupies 1–89; sequence MAKEISSELL…SELLGDAPVQ (89 aa). Residues 1-123 are Cytoplasmic-facing; that stretch reads MAKEISSELL…LAKFATIFTP (123 aa). Catalysis depends on Cys29, which acts as the Phosphocysteine intermediate; for EIIB activity. The PTS EIIC type-1 domain occupies 115–474; that stretch reads AKFATIFTPL…LFGCRNVNLD (360 aa). A helical transmembrane segment spans residues 124–144; the sequence is LIPGFIAAGLLLGIATLIATV. Residues 145 to 157 lie on the Periplasmic side of the membrane; that stretch reads MHVPADAQGTLPD. Residues 158-178 form a helical membrane-spanning segment; that stretch reads ALNFMKVFSKGLFTFLVILVG. Over 179 to 180 the chain is Cytoplasmic; that stretch reads YN. Residues 181-201 form a helical membrane-spanning segment; sequence AAQAFGGTGVNGAIIAALFLL. Residues 202-217 lie on the Periplasmic side of the membrane; the sequence is GYNPAATTGYYAGFHD. The helical transmembrane segment at 218–238 threads the bilayer; it reads FFGLPIDPRGNIIGVLIAAWA. The Cytoplasmic portion of the chain corresponds to 239 to 260; sequence CARIEGMVRRFMPDDLDMLLTS. A helical transmembrane segment spans residues 261–281; it reads LITLLITATLAYLIIMPLGGW. The Periplasmic portion of the chain corresponds to 282 to 301; it reads LFEGMSWLFMHLNSNPFGCA. A helical transmembrane segment spans residues 302 to 322; the sequence is VLAGLFLIAVVFGVHQGFIPV. At 323–334 the chain is on the cytoplasmic side; sequence YLALMDSQGFNS. A helical membrane pass occupies residues 335 to 355; it reads LFPILSMAGAGQVGAALALYW. Topologically, residues 356-368 are periplasmic; sequence RAQPHSALRSQVR. The helical transmembrane segment at 369–389 threads the bilayer; it reads GAIIPGLLGVGEPLIYGVTLP. Topologically, residues 390–393 are cytoplasmic; the sequence is RMKP. The helical transmembrane segment at 394 to 414 threads the bilayer; it reads FVTACLGGAAGGLFIGLIAWW. Over 415–440 the chain is Periplasmic; it reads GLPMGLNSAFGPSGLVALPLMTSAQG. A helical transmembrane segment spans residues 441–461; sequence ILPAMAVYAGGILVAWVCGFI. Over 462 to 474 the chain is Cytoplasmic; the sequence is FTTLFGCRNVNLD.

The protein localises to the cell inner membrane. It carries out the reaction N-acetyl-beta-D-muramate(out) + N(pros)-phospho-L-histidyl-[protein] = N-acetyl-beta-D-muramate 6-phosphate(in) + L-histidyl-[protein]. Its function is as follows. The phosphoenolpyruvate-dependent sugar phosphotransferase system (sugar PTS), a major carbohydrate active transport system, catalyzes the phosphorylation of incoming sugar substrates concomitantly with their translocation across the cell membrane. This system is involved in N-acetylmuramic acid (MurNAc) transport, yielding cytoplasmic MurNAc-6-P. Is also able to take up anhydro-N-acetylmuramic acid (anhMurNAc), but cannot phosphorylate the carbon 6, probably because of the 1,6-anhydro ring. The polypeptide is PTS system N-acetylmuramic acid-specific EIIBC component (murP) (Shigella flexneri).